Reading from the N-terminus, the 158-residue chain is UPF0758 protein YkfG (158 aa).

The MPN domain maps to 36 to 158; the sequence is AFTSTHAVRE…IYSFAEHGLL (123 aa). Zn(2+) is bound by residues H107, H109, and D120. The JAMM motif motif lies at 107–120; it reads HNHPSGETTPSQAD.

This sequence belongs to the UPF0758 family.

In Escherichia coli (strain K12), this protein is UPF0758 protein YkfG (ykfG).